The sequence spans 443 residues: RILP-like protein homolog (443 aa).

Residues 8 to 96 (EMGEMVLDAI…ESEKLEKAEF (89 aa)) form the RH1 domain. The stretch at 59–315 (LELLEALATK…TLNEQLAELK (257 aa)) forms a coiled coil. The 120-residue stretch at 282-401 (RPRYTTRELK…KSSESGIRKF (120 aa)) folds into the RH2 domain. The segment at 311 to 394 (LAELKPPSQA…PDDAPWKKSS (84 aa)) is disordered. The segment covering 332-355 (DDSDEDDDGHVADNDDDDDEEEAA) has biased composition (acidic residues). Over residues 356–368 (AEANELEPPAAGE) the composition is skewed to low complexity.

Belongs to the RILPL family. Interacts with Arl8 (in GTP-bound form).

It localises to the lysosome membrane. Functionally, may have a role in lysosome distribution by interacting with Arl8. The sequence is that of RILP-like protein homolog from Drosophila melanogaster (Fruit fly).